The sequence spans 442 residues: Histidine--tRNA ligase (442 aa).

This sequence belongs to the class-II aminoacyl-tRNA synthetase family. In terms of assembly, homodimer.

The protein resides in the cytoplasm. The catalysed reaction is tRNA(His) + L-histidine + ATP = L-histidyl-tRNA(His) + AMP + diphosphate + H(+). This is Histidine--tRNA ligase from Helicobacter pylori (strain P12).